Reading from the N-terminus, the 2098-residue chain is 1-phosphatidylinositol 3-phosphate 5-kinase (2098 aa).

A disordered region spans residues 1 to 45 (MATDDKTSPTLDSANDLPRSPTSPSHLTHFKPLTPDQDEPPFKSA). A2 bears the N-acetylalanine mark. Phosphoserine; by autocatalysis occurs at positions 23 and 48. The tract at residues 57–123 (KERAEGGQGE…EPTFGGHDPR (67 aa)) is disordered. Polar residues predominate over residues 66-88 (EQQPLSGSWTSPQLPSRTQSVRS). Residue S88 is modified to Phosphoserine. Residues 158–218 (DSQCKECYDC…ACTYCRKIAL (61 aa)) form an FYVE-type zinc finger. Residues C164, C167, C180, C183, C188, C191, C210, and C213 each coordinate Zn(2+). The disordered stretch occupies residues 292–329 (VQEDAGKSPARNRSASITNLSLDRSGSPMVPSYETSVS). 3 positions are modified to phosphoserine: S299, S307, and S312. The span at 302–315 (RNRSASITNLSLDR) shows a compositional bias: polar residues. At S318 the chain carries Phosphoserine; by PKB/AKT1 or PKB/AKT2. S329 carries the phosphoserine modification. One can recognise a DEP domain in the interval 365-440 (HSSGMEFQDH…DEYALYRPLQ (76 aa)). Over residues 442–459 (TEFSETPSPDSDSVNSVE) the composition is skewed to polar residues. Residues 442 to 469 (TEFSETPSPDSDSVNSVEGHSEPSWFKD) form a disordered region. Residues 460–469 (GHSEPSWFKD) show a composition bias toward basic and acidic residues. Phosphoserine is present on S475. The disordered stretch occupies residues 484–505 (GDDNLANSASPSKRTSVSSFQS). Polar residues predominate over residues 488-505 (LANSASPSKRTSVSSFQS). The tract at residues 616–868 (MMALLQQLLH…MICVAYHSQL (253 aa)) is chaperonin-like domain. Disordered stretches follow at residues 1161-1191 (RIQP…NEGD) and 1512-1616 (FQQE…STDS). Low complexity predominate over residues 1177-1186 (SSTSSGQSGS). Phosphoserine; by autocatalysis is present on S1522. 2 positions are modified to phosphoserine: S1544 and S1549. Residues 1562-1578 (LTTLSSQSSTSSTHLQL) show a composition bias toward low complexity. Phosphoserine; by autocatalysis is present on S1669. Residues 1692-1799 (QWNSAEEGLP…PQDEVDGGDT (108 aa)) form a disordered region. The segment covering 1704 to 1714 (STSDSRPKSSS) has biased composition (low complexity). Positions 1723-1735 (GGQTNRTTETEPQ) are enriched in polar residues. At S1754 the chain carries Phosphoserine. The region spanning 1758-2084 (SSQKRETLRG…RFCEAMDKYF (327 aa)) is the PIPK domain. The segment at 1842-2098 (EEDFIRSLSH…DHWTGLGLNC (257 aa)) is catalytic. Residues S1969 and S2053 each carry the phosphoserine; by autocatalysis modification.

Component of the PI(3,5)P2 regulatory complex/PAS complex, at least composed of PIKFYVE, FIG4 and VAC14. VAC14 nucleates the assembly of the complex and serves as a scaffold by pentamerizing into a star-shaped structure, which can bind a single copy each of PIKFYVE and FIG4 and coordinates their activities. Interacts (via chaperonin-like domain) with RABEPK; the interaction recruits RABEPK to the endosomal membrane. Interacts with SPAG9. Interacts with EGFR. Autophosphorylates which inhibits its own phosphatidylinositol 3-phosphate 5-kinase activity, stimulates FIG4 lipid phosphatase activity and down-regulates lipid product formation. Dephosphorylated by FIG4 in the PI(3,5)P2 regulatory complex, at Ser-48, Ser-1669 and Ser-2053. Phosphorylated in response to insulin at Ser-318 in a protein kinase B (PKB)-dependent manner.

It is found in the endosome membrane. The protein resides in the early endosome membrane. It localises to the cytoplasmic vesicle. Its subcellular location is the phagosome membrane. The protein localises to the late endosome membrane. It carries out the reaction a 1,2-diacyl-sn-glycero-3-phospho-(1D-myo-inositol-3-phosphate) + ATP = a 1,2-diacyl-sn-glycero-3-phospho-(1D-myo-inositol-3,5-bisphosphate) + ADP + H(+). The enzyme catalyses a 1,2-diacyl-sn-glycero-3-phospho-(1D-myo-inositol) + ATP = a 1,2-diacyl-sn-glycero-3-phospho-(1D-myo-inositol-5-phosphate) + ADP + H(+). The catalysed reaction is L-seryl-[protein] + ATP = O-phospho-L-seryl-[protein] + ADP + H(+). Inhibited by apilimod and YM201636. Its function is as follows. Dual specificity kinase implicated in myriad essential cellular processes such as maintenance of endomembrane homeostasis, and endocytic-vacuolar pathway, lysosomal trafficking, nuclear transport, stress- or hormone-induced signaling and cell cycle progression. The PI(3,5)P2 regulatory complex regulates both the synthesis and turnover of phosphatidylinositol 3,5-bisphosphate (PtdIns(3,5)P2). Sole enzyme to catalyze the phosphorylation of phosphatidylinositol 3-phosphate on the fifth hydroxyl of the myo-inositol ring, to form (PtdIns(3,5)P2). Also catalyzes the phosphorylation of phosphatidylinositol on the fifth hydroxyl of the myo-inositol ring, to form phosphatidylinositol 5-phosphate (PtdIns(5)P). Has serine-protein kinase activity and is able to autophosphorylate and transphosphorylate. Autophosphorylation inhibits its own phosphatidylinositol 3-phosphate 5-kinase activity, stimulates FIG4 lipid phosphatase activity and down-regulates lipid product formation. Involved in key endosome operations such as fission and fusion in the course of endosomal cargo transport. Required for the maturation of early into late endosomes, phagosomes and lysosomes. Regulates vacuole maturation and nutrient recovery following engulfment of macromolecules, initiates the redistribution of accumulated lysosomal contents back into the endosome network. Critical regulator of the morphology, degradative activity, and protein turnover of the endolysosomal system in macrophages and platelets. In neutrophils, critical to perform chemotaxis, generate ROS, and undertake phagosome fusion with lysosomes. Plays a key role in the processing and presentation of antigens by major histocompatibility complex class II (MHC class II) mediated by CTSS. Regulates melanosome biogenesis by controlling the delivery of proteins from the endosomal compartment to the melanosome. Essential for systemic glucose homeostasis, mediates insulin-induced signals for endosome/actin remodeling in the course of GLUT4 translocation/glucose uptake activation. Supports microtubule-based endosome-to-trans-Golgi network cargo transport, through association with SPAG9 and RABEPK. Mediates EGFR trafficking to the nucleus. (Microbial infection) Required for cell entry of coronaviruses SARS-CoV and SARS-CoV-2, as well as human coronavirus EMC (HCoV-EMC) by endocytosis. The chain is 1-phosphatidylinositol 3-phosphate 5-kinase from Homo sapiens (Human).